Here is a 390-residue protein sequence, read N- to C-terminus: Zinc finger CCCH domain-containing protein 46 (390 aa).

The C3H1-type zinc finger occupies S2–P29. The tract at residues A27–Q129 is disordered. Low complexity predominate over residues G48–F76. The span at P106–Q129 shows a compositional bias: polar residues. The segment at W146–P211 is required for transcriptional activation activity. The segment covering S230 to Q248 has biased composition (polar residues). Residues S230 to T284 form a disordered region. Over residues G250–A268 the composition is skewed to low complexity.

As to quaternary structure, interacts with GSK1 and GSK4. Phosphorylated on serine and threonine residues by GSK1. Phosphorylation represses nuclear localization. Expressed in the adaxial face of the collar, nodes and the basal region of elongating internodes.

The protein localises to the nucleus. The protein resides in the cytoplasm. Functionally, transcriptional activator that binds double-stranded DNA and the single-stranded RNA polymers poly(rA), poly(rU) and poly(rG), but not poly(rC). Mediates optimal plant architecture through brassinosteroid (BR) signaling. May act as a negative regulator in sterol homeostasis. Acts as a negative regulator of BR signaling. Binds to the specific DNA sequence 5'-CTCGC-3' of BZR1 promoter and negatively regulates BZR1. Acts as an antagonistic transcription factor of BZR1 to attenuate the BR signaling pathway and regulate leaf bending. Represses the expression of ILI1, and activates that of IBH1 to balance the regulation activity of BZR1. This is Zinc finger CCCH domain-containing protein 46 from Oryza sativa subsp. japonica (Rice).